We begin with the raw amino-acid sequence, 31 residues long: Photosystem II reaction center protein T (31 aa).

Methionine 1 carries the N-formylmethionine modification. The chain crosses the membrane as a helical span at residues 3–23; sequence SVAYILVLTMALAVLFFAIAF.

It belongs to the PsbT family. As to quaternary structure, PSII is composed of 1 copy each of membrane proteins PsbA, PsbB, PsbC, PsbD, PsbE, PsbF, PsbH, PsbI, PsbJ, PsbK, PsbL, PsbM, PsbT, PsbX, PsbY, PsbZ, Psb30/Ycf12, peripheral proteins PsbO, CyanoQ (PsbQ), PsbU, PsbV and a large number of cofactors. It forms dimeric complexes.

The protein localises to the cellular thylakoid membrane. Its function is as follows. Found at the monomer-monomer interface of the photosystem II (PS II) dimer, plays a role in assembly and dimerization of PSII. PSII is a light-driven water plastoquinone oxidoreductase, using light energy to abstract electrons from H(2)O, generating a proton gradient subsequently used for ATP formation. This is Photosystem II reaction center protein T from Synechocystis sp. (strain ATCC 27184 / PCC 6803 / Kazusa).